A 388-amino-acid chain; its full sequence is 3-ketoacyl-CoA thiolase (388 aa).

The Acyl-thioester intermediate role is filled by C91. Residues H343 and C373 each act as proton acceptor in the active site.

This sequence belongs to the thiolase-like superfamily. Thiolase family. Heterotetramer of two alpha chains (FadB) and two beta chains (FadA).

It localises to the cytoplasm. It catalyses the reaction an acyl-CoA + acetyl-CoA = a 3-oxoacyl-CoA + CoA. The protein operates within lipid metabolism; fatty acid beta-oxidation. In terms of biological role, catalyzes the final step of fatty acid oxidation in which acetyl-CoA is released and the CoA ester of a fatty acid two carbons shorter is formed. The protein is 3-ketoacyl-CoA thiolase of Photorhabdus laumondii subsp. laumondii (strain DSM 15139 / CIP 105565 / TT01) (Photorhabdus luminescens subsp. laumondii).